The primary structure comprises 175 residues: MTTIVTIRKGGKVVMAGDGQVSLGQTVMKGNARKVRRIGKGDVIAGFAGATADAFTLLERLEKKLEQYPGQLMRAAVELAKDWRTDKYLRNLEAMMLVADKSVTLAITGNGDVLEPEHGALAIGSGGNYALAAARALMDTDKSAEDVARRALDIAADICVYTNHNVVIETLDAEA.

The active site involves Thr-2. Na(+) contacts are provided by Ala-156, Cys-159, and Thr-162.

This sequence belongs to the peptidase T1B family. HslV subfamily. In terms of assembly, a double ring-shaped homohexamer of HslV is capped on each side by a ring-shaped HslU homohexamer. The assembly of the HslU/HslV complex is dependent on binding of ATP.

It localises to the cytoplasm. The enzyme catalyses ATP-dependent cleavage of peptide bonds with broad specificity.. Its activity is regulated as follows. Allosterically activated by HslU binding. Functionally, protease subunit of a proteasome-like degradation complex believed to be a general protein degrading machinery. The protein is ATP-dependent protease subunit HslV of Rhizobium rhizogenes (strain K84 / ATCC BAA-868) (Agrobacterium radiobacter).